Reading from the N-terminus, the 147-residue chain is Large ribosomal subunit protein uL15 (147 aa).

This sequence belongs to the universal ribosomal protein uL15 family. As to quaternary structure, part of the 50S ribosomal subunit.

Binds to the 23S rRNA. The polypeptide is Large ribosomal subunit protein uL15 (Blochmanniella floridana).